The primary structure comprises 501 residues: Type B diterpene cyclase (501 aa).

It belongs to the terpene synthase family. Monomer. Mg(2+) serves as cofactor.

The enzyme catalyses geranylgeranyl diphosphate = tuberculosinyl diphosphate. Its activity is regulated as follows. Strongly inhibited by 15-aza-dihydrogeranylgeraniol and 5-isopropyl-N,N,N,2-tetramethyl-4-(piperidine-1-carbonyloxy)benzenaminium chloride (Amo-1618). Inhibited by GGPP concentrations higher than 50 uM. In terms of biological role, catalyzes the formation of tuberculosinyl diphosphate from geranylgeranyl diphosphate (GGPP). It could also react with (14R/S)-14,15-oxidoGGPP to generate 3alpha- and 3beta-hydroxytuberculosinyl diphosphate. The chain is Type B diterpene cyclase from Mycobacterium tuberculosis (strain ATCC 25618 / H37Rv).